A 29-amino-acid chain; its full sequence is Cyclotide psyleio D (29 aa).

A cross-link (cyclopeptide (Gly-Asp)) is located at residues 1-29 (GLPVCGESCFGGTCNTPGCSCTWPVCTRD). Cystine bridges form between cysteine 5-cysteine 19, cysteine 9-cysteine 21, and cysteine 14-cysteine 26.

This is a cyclic peptide.

In terms of biological role, probably participates in a plant defense mechanism. This Psychotria brachyceras protein is Cyclotide psyleio D.